We begin with the raw amino-acid sequence, 642 residues long: Chaperone protein DnaK (642 aa).

At T198 the chain carries Phosphothreonine; by autocatalysis. Positions D578–K589 are enriched in basic and acidic residues. Positions D578–K642 are disordered. Residues A603–D619 show a composition bias toward low complexity.

This sequence belongs to the heat shock protein 70 family.

Acts as a chaperone. This chain is Chaperone protein DnaK, found in Hahella chejuensis (strain KCTC 2396).